The following is a 223-amino-acid chain: uncharacterized protein (223 aa).

The protein to M.jannaschii MJ1453.

This is an uncharacterized protein from Methanothermobacter thermautotrophicus (strain ATCC 29096 / DSM 1053 / JCM 10044 / NBRC 100330 / Delta H) (Methanobacterium thermoautotrophicum).